The sequence spans 204 residues: Protein DESIGUAL 4 (204 aa).

Transmembrane regions (helical) follow at residues 13–33 (IITV…VAGF), 60–80 (FVLG…ANVI), 107–127 (CLFL…NGIW), and 143–163 (VFSI…IYYI). The interval 177 to 204 (KPNKTKPSELKPIPTEPNEAEPNSTPNP) is disordered. Residue asparagine 179 is glycosylated (N-linked (GlcNAc...) asparagine).

It belongs to the DESIGUAL family. Only expressed in inflorescences.

The protein localises to the endoplasmic reticulum membrane. The polypeptide is Protein DESIGUAL 4 (Arabidopsis thaliana (Mouse-ear cress)).